A 156-amino-acid chain; its full sequence is Ribosomal RNA large subunit methyltransferase H (156 aa).

Residues Leu-73, Gly-104, and 123-128 (LSSLTL) contribute to the S-adenosyl-L-methionine site.

The protein belongs to the RNA methyltransferase RlmH family. In terms of assembly, homodimer.

It is found in the cytoplasm. The enzyme catalyses pseudouridine(1915) in 23S rRNA + S-adenosyl-L-methionine = N(3)-methylpseudouridine(1915) in 23S rRNA + S-adenosyl-L-homocysteine + H(+). Functionally, specifically methylates the pseudouridine at position 1915 (m3Psi1915) in 23S rRNA. This chain is Ribosomal RNA large subunit methyltransferase H, found in Neisseria meningitidis serogroup C (strain 053442).